Here is a 227-residue protein sequence, read N- to C-terminus: NAD(P)H-quinone oxidoreductase subunit K, chloroplastic (227 aa).

Residues Cys43, Cys44, Cys108, and Cys139 each contribute to the [4Fe-4S] cluster site.

The protein belongs to the complex I 20 kDa subunit family. In terms of assembly, NDH is composed of at least 16 different subunits, 5 of which are encoded in the nucleus. [4Fe-4S] cluster is required as a cofactor.

It localises to the plastid. It is found in the chloroplast thylakoid membrane. The catalysed reaction is a plastoquinone + NADH + (n+1) H(+)(in) = a plastoquinol + NAD(+) + n H(+)(out). It carries out the reaction a plastoquinone + NADPH + (n+1) H(+)(in) = a plastoquinol + NADP(+) + n H(+)(out). Functionally, NDH shuttles electrons from NAD(P)H:plastoquinone, via FMN and iron-sulfur (Fe-S) centers, to quinones in the photosynthetic chain and possibly in a chloroplast respiratory chain. The immediate electron acceptor for the enzyme in this species is believed to be plastoquinone. Couples the redox reaction to proton translocation, and thus conserves the redox energy in a proton gradient. This Drimys granadensis protein is NAD(P)H-quinone oxidoreductase subunit K, chloroplastic.